A 189-amino-acid polypeptide reads, in one-letter code: Thymidine kinase (189 aa).

ATP-binding positions include 9–16 and 85–88; these read GTMNSGKS and DEAQ. Glu86 acts as the Proton acceptor in catalysis. Zn(2+) contacts are provided by Cys143, Cys146, Cys180, and His183.

It belongs to the thymidine kinase family. As to quaternary structure, homotetramer.

Its subcellular location is the cytoplasm. The catalysed reaction is thymidine + ATP = dTMP + ADP + H(+). The protein is Thymidine kinase of Lactococcus lactis subsp. lactis (strain IL1403) (Streptococcus lactis).